A 144-amino-acid chain; its full sequence is Large ribosomal subunit protein uL15 (144 aa).

The tract at residues 1 to 59 (MHLNTLAPAPGAKKSSKRVGRGMGSGLGKTGGRGHKGQKSRSGGSVKPGFEGGQMPIQR) is disordered. A compositionally biased stretch (gly residues) spans 21 to 31 (RGMGSGLGKTG).

The protein belongs to the universal ribosomal protein uL15 family. In terms of assembly, part of the 50S ribosomal subunit.

In terms of biological role, binds to the 23S rRNA. This is Large ribosomal subunit protein uL15 from Pseudoalteromonas atlantica (strain T6c / ATCC BAA-1087).